Here is a 1022-residue protein sequence, read N- to C-terminus: Protein translocase subunit SecA (1022 aa).

Residues glutamine 143, 161–165 (GEGKT), and aspartate 661 contribute to the ATP site. The interval 973–1001 (AGSILSHESDVPSGTAAQQPIKADVKPGR) is disordered. Zn(2+) is bound by residues cysteine 1005, cysteine 1007, cysteine 1016, and histidine 1017.

It belongs to the SecA family. Monomer and homodimer. Part of the essential Sec protein translocation apparatus which comprises SecA, SecYEG and auxiliary proteins SecDF. Other proteins may also be involved. Zn(2+) is required as a cofactor.

Its subcellular location is the cell inner membrane. The protein localises to the cytoplasm. The enzyme catalyses ATP + H2O + cellular proteinSide 1 = ADP + phosphate + cellular proteinSide 2.. Functionally, part of the Sec protein translocase complex. Interacts with the SecYEG preprotein conducting channel. Has a central role in coupling the hydrolysis of ATP to the transfer of proteins into and across the cell membrane, serving as an ATP-driven molecular motor driving the stepwise translocation of polypeptide chains across the membrane. The protein is Protein translocase subunit SecA of Chlorobium phaeobacteroides (strain DSM 266 / SMG 266 / 2430).